A 950-amino-acid chain; its full sequence is Kinase suppressor of Ras 2 (950 aa).

A disordered region spans residues 239 to 296 (PPLESGHRSLPPSPRQRHAVRTPPRTPNIVTTVTPPGTPPMRKKNKLKPPGTPPPSSR). Positions 259 to 273 (RTPPRTPNIVTTVTP) are enriched in low complexity. Phosphothreonine occurs at positions 272 and 276. The Phorbol-ester/DAG-type zinc-finger motif lies at 412–456 (KHRFSTKYWMSQTCTVCGKGMLFGLKCKNCKLKCHNKCTKEAPPC). 8 residues coordinate Zn(2+): H413, C425, C428, C438, C441, H446, C449, and C456. S474 is subject to Phosphoserine; by MARK3. T497 carries the post-translational modification Phosphothreonine. The tract at residues 498 to 556 (LPKTNKINKDHIPVPYQPDSSSNPSSTTSSTPSSPAPPLPPSATPPSPLHPSPQCTRQQ) is disordered. Residues 517–530 (SSSNPSSTTSSTPS) are compositionally biased toward low complexity. Pro residues predominate over residues 531 to 548 (SPAPPLPPSATPPSPLHP). One can recognise a Protein kinase domain in the interval 666–931 (LEIGELIGKG…TKLMDMLEKL (266 aa)). An ATP-binding site is contributed by 672 to 680 (IGKGRFGQV). D786 functions as the Proton donor/acceptor in the catalytic mechanism. Residues K788 and D803 each contribute to the ATP site.

The protein belongs to the protein kinase superfamily. TKL Ser/Thr protein kinase family. In terms of assembly, heterodimerizes (via N-terminus) with BRAF (via N-terminus) in a MAP2K1/MEK1-dependent manner. Interacts with BRAF; this increases the low intrinsic protein kinase activity of KSR2. Interacts with MAP2K1, forming a heterodimer that can dimerize to form a heterotetramer. Interacts with MAP3K8, MAPK, RAS and RAF. In terms of processing, phosphorylated on Ser-474 by MARK3. Mainly expressed in brain and kidney.

It is found in the cytoplasm. The protein localises to the membrane. The enzyme catalyses L-seryl-[protein] + ATP = O-phospho-L-seryl-[protein] + ADP + H(+). It carries out the reaction L-threonyl-[protein] + ATP = O-phospho-L-threonyl-[protein] + ADP + H(+). Kinase activity is inhibited by ASC24. Its function is as follows. Location-regulated scaffold connecting MEK to RAF. Has very low protein kinase activity and can phosphorylate MAP2K1 at several Ser and Thr residues with very low efficiency (in vitro). Acts as MAP2K1/MEK1-dependent allosteric activator of BRAF; upon binding to MAP2K1/MEK1, dimerizes with BRAF and promotes BRAF-mediated phosphorylation of MAP2K1/MEK1. Interaction with BRAF enhances KSR2-mediated phosphorylation of MAP2K1 (in vitro). Blocks MAP3K8 kinase activity and MAP3K8-mediated signaling. Acts as a negative regulator of MAP3K3-mediated activation of ERK, JNK and NF-kappa-B pathways, inhibiting MAP3K3-mediated interleukin-8 production. This Homo sapiens (Human) protein is Kinase suppressor of Ras 2.